The chain runs to 431 residues: Teosinte glume architecture 1 (431 aa).

Disordered stretches follow at residues 18–55 and 68–102; these read QDHA…GAPA and ECEP…QQCP. Positions 21–41 are enriched in low complexity; it reads AAAAPSSGGHAANAAAAGTGT. The segment at 101 to 178 adopts an SBP-type zinc-finger fold; that stretch reads CPSCAVDGCR…DGHNRRRRKP (78 aa). Positions 104, 109, 126, 129, 145, 148, 152, and 164 each coordinate Zn(2+). A compositionally biased stretch (gly residues) spans 408 to 419; sequence GGGSGGGEGSSD. Residues 408–431 form a disordered region; the sequence is GGGSGGGEGSSDGGTSSSMPFSWQ.

As to quaternary structure, monomer and homodimer. Strongly expressed in immature ears and weakly in husks. Found in the inflorescence meristem of the developing ear, in the spikelet pair primordia, the glume primordia, the cupule forming region and other floral organs. Not detected in other tissues.

In terms of biological role, SBP transcriptional regulator probably involved in the domestication of maize. Acts as a transcriptional repressor binding to a 5'-GTAC-3' motif. May repress the growth of lateral branches in length and numbers. The polypeptide is Teosinte glume architecture 1 (Zea mays (Maize)).